Here is a 64-residue protein sequence, read N- to C-terminus: Bubble protein (64 aa).

Cystine bridges form between C3-C30, C18-C38, C28-C54, and C49-C64.

Its subcellular location is the secreted. In terms of biological role, may act as a toxin. May recognize a molecule or part of a molecule with a negatively charged surface potential. This Penicillium brevicompactum protein is Bubble protein.